The chain runs to 198 residues: Recombination protein RecR (198 aa).

Residues 57-72 form a C4-type zinc finger; the sequence is CRQCRTLSEEELCPQC. A Toprim domain is found at 80–174; it reads SLLCVVEGPL…TLSRIAHGVP (95 aa).

The protein belongs to the RecR family.

In terms of biological role, may play a role in DNA repair. It seems to be involved in an RecBC-independent recombinational process of DNA repair. It may act with RecF and RecO. The polypeptide is Recombination protein RecR (Pseudomonas paraeruginosa (strain DSM 24068 / PA7) (Pseudomonas aeruginosa (strain PA7))).